The sequence spans 341 residues: Phenylalanine--tRNA ligase alpha subunit (341 aa).

Glu-256 is a Mg(2+) binding site.

The protein belongs to the class-II aminoacyl-tRNA synthetase family. Phe-tRNA synthetase alpha subunit type 1 subfamily. In terms of assembly, tetramer of two alpha and two beta subunits. Mg(2+) serves as cofactor.

It localises to the cytoplasm. It catalyses the reaction tRNA(Phe) + L-phenylalanine + ATP = L-phenylalanyl-tRNA(Phe) + AMP + diphosphate + H(+). The sequence is that of Phenylalanine--tRNA ligase alpha subunit from Leptospira biflexa serovar Patoc (strain Patoc 1 / Ames).